Consider the following 93-residue polypeptide: Small ribosomal subunit protein uS19 (93 aa).

It belongs to the universal ribosomal protein uS19 family.

In terms of biological role, protein S19 forms a complex with S13 that binds strongly to the 16S ribosomal RNA. The sequence is that of Small ribosomal subunit protein uS19 from Clostridioides difficile (strain 630) (Peptoclostridium difficile).